The following is a 244-amino-acid chain: tRNA pseudouridine synthase A (244 aa).

The active-site Nucleophile is the D52. A substrate-binding site is contributed by Y110.

This sequence belongs to the tRNA pseudouridine synthase TruA family. As to quaternary structure, homodimer.

The catalysed reaction is uridine(38/39/40) in tRNA = pseudouridine(38/39/40) in tRNA. Functionally, formation of pseudouridine at positions 38, 39 and 40 in the anticodon stem and loop of transfer RNAs. This chain is tRNA pseudouridine synthase A, found in Brevibacillus brevis (strain 47 / JCM 6285 / NBRC 100599).